The chain runs to 67 residues: MPKLKTKSGAKKRFKITGTGKVMYAQAGKRHGMIKRTNKQIRNLRGTTTLFEGDAANVKKYFLPNQR.

This sequence belongs to the bacterial ribosomal protein bL35 family.

The sequence is that of Large ribosomal subunit protein bL35 from Methylorubrum extorquens (strain CM4 / NCIMB 13688) (Methylobacterium extorquens).